Consider the following 113-residue polypeptide: Gamma-glutamylcyclotransferase family protein YtfP (113 aa).

Belongs to the gamma-glutamylcyclotransferase family.

The protein is Gamma-glutamylcyclotransferase family protein YtfP (ytfP) of Escherichia coli O157:H7.